Consider the following 190-residue polypeptide: Segregation and condensation protein B (190 aa).

This sequence belongs to the ScpB family. As to quaternary structure, homodimer. Homodimerization may be required to stabilize the binding of ScpA to the Smc head domains. Component of a cohesin-like complex composed of ScpA, ScpB and the Smc homodimer, in which ScpA and ScpB bind to the head domain of Smc. The presence of the three proteins is required for the association of the complex with DNA.

The protein localises to the cytoplasm. Functionally, participates in chromosomal partition during cell division. May act via the formation of a condensin-like complex containing Smc and ScpA that pull DNA away from mid-cell into both cell halves. This Ruminiclostridium cellulolyticum (strain ATCC 35319 / DSM 5812 / JCM 6584 / H10) (Clostridium cellulolyticum) protein is Segregation and condensation protein B.